Here is a 331-residue protein sequence, read N- to C-terminus: Pyrimidine monooxygenase RutA (331 aa).

FMN-binding positions include 79 to 80 (IK), asparagine 145, glutamate 154, 170 to 171 (RY), and serine 220. Residues 300–331 (WLTEQSQKDTRSGTDTNVRQMADPTSASAFNH) are disordered. The segment covering 312 to 331 (GTDTNVRQMADPTSASAFNH) has biased composition (polar residues).

It belongs to the NtaA/SnaA/DszA monooxygenase family. RutA subfamily.

The catalysed reaction is uracil + FMNH2 + NADH + O2 = (Z)-3-ureidoacrylate + FMN + NAD(+) + H2O + H(+). The enzyme catalyses thymine + FMNH2 + NADH + O2 = (Z)-2-methylureidoacrylate + FMN + NAD(+) + H2O + H(+). Functionally, catalyzes the pyrimidine ring opening between N-3 and C-4 by an unusual flavin hydroperoxide-catalyzed mechanism, adding oxygen atoms in the process to yield ureidoacrylate peracid, that immediately reacts with FMN forming ureidoacrylate and FMN-N(5)-oxide. The FMN-N(5)-oxide reacts spontaneously with NADH to produce FMN. Requires the flavin reductase RutF to regenerate FMN in vivo. The polypeptide is Pyrimidine monooxygenase RutA (Escherichia coli O7:K1 (strain IAI39 / ExPEC)).